The sequence spans 54 residues: UPF0391 membrane protein Pnap_0920 (54 aa).

Transmembrane regions (helical) follow at residues 6–26 (VVFL…IAAG) and 30–50 (IAKI…VVSL).

The protein belongs to the UPF0391 family.

The protein resides in the cell membrane. The polypeptide is UPF0391 membrane protein Pnap_0920 (Polaromonas naphthalenivorans (strain CJ2)).